The sequence spans 363 residues: Putative lipoate-protein ligase A (363 aa).

Positions 49-229 (STAKHCLLLY…CFLLHKSHST (181 aa)) constitute a BPL/LPL catalytic domain. ATP-binding positions include arginine 91, 96–99 (GTVF), and lysine 152. Lysine 152 contributes to the (R)-lipoate binding site.

Belongs to the LplA family. As to quaternary structure, monomer.

The protein resides in the cytoplasm. The catalysed reaction is L-lysyl-[lipoyl-carrier protein] + (R)-lipoate + ATP = N(6)-[(R)-lipoyl]-L-lysyl-[lipoyl-carrier protein] + AMP + diphosphate + H(+). It participates in protein modification; protein lipoylation via exogenous pathway; protein N(6)-(lipoyl)lysine from lipoate: step 1/2. It functions in the pathway protein modification; protein lipoylation via exogenous pathway; protein N(6)-(lipoyl)lysine from lipoate: step 2/2. Its function is as follows. Catalyzes both the ATP-dependent activation of exogenously supplied lipoate to lipoyl-AMP and the transfer of the activated lipoyl onto the lipoyl domains of lipoate-dependent enzymes. In Schizosaccharomyces pombe (strain 972 / ATCC 24843) (Fission yeast), this protein is Putative lipoate-protein ligase A (aim22).